Consider the following 173-residue polypeptide: Crossover junction endodeoxyribonuclease RuvC (173 aa).

Active-site residues include Asp-11, Glu-71, and Asp-143. Mg(2+)-binding residues include Asp-11, Glu-71, and Asp-143.

Belongs to the RuvC family. Homodimer which binds Holliday junction (HJ) DNA. The HJ becomes 2-fold symmetrical on binding to RuvC with unstacked arms; it has a different conformation from HJ DNA in complex with RuvA. In the full resolvosome a probable DNA-RuvA(4)-RuvB(12)-RuvC(2) complex forms which resolves the HJ. Mg(2+) serves as cofactor.

The protein resides in the cytoplasm. The catalysed reaction is Endonucleolytic cleavage at a junction such as a reciprocal single-stranded crossover between two homologous DNA duplexes (Holliday junction).. Its function is as follows. The RuvA-RuvB-RuvC complex processes Holliday junction (HJ) DNA during genetic recombination and DNA repair. Endonuclease that resolves HJ intermediates. Cleaves cruciform DNA by making single-stranded nicks across the HJ at symmetrical positions within the homologous arms, yielding a 5'-phosphate and a 3'-hydroxyl group; requires a central core of homology in the junction. The consensus cleavage sequence is 5'-(A/T)TT(C/G)-3'. Cleavage occurs on the 3'-side of the TT dinucleotide at the point of strand exchange. HJ branch migration catalyzed by RuvA-RuvB allows RuvC to scan DNA until it finds its consensus sequence, where it cleaves and resolves the cruciform DNA. The chain is Crossover junction endodeoxyribonuclease RuvC from Brucella suis biovar 1 (strain 1330).